Here is a 359-residue protein sequence, read N- to C-terminus: Hereditary hemochromatosis protein homolog (359 aa).

The first 24 residues, 1–24, serve as a signal peptide directing secretion; it reads MSLSAGLPVRPLLLLLLLLWSVAP. Positions 25–126 are alpha-1; that stretch reads QALPPRSHSL…KVTKLGVVSE (102 aa). Topologically, residues 25 to 318 are extracellular; sequence QALPPRSHSL…WEPLQSQAMI (294 aa). Asn-114, Asn-142, Asn-166, and Asn-246 each carry an N-linked (GlcNAc...) asparagine glycan. The interval 127-217 is alpha-2; it reads SHILQVVLGC…ELGRGVLGQQ (91 aa). 2 cysteine pairs are disulfide-bonded: Cys-136-Cys-199 and Cys-237-Cys-294. The interval 218–309 is alpha-3; it reads VPTLVKVTRH…GLDQPLTASW (92 aa). The Ig-like C1-type domain occupies 219-308; sequence PTLVKVTRHW…PGLDQPLTAS (90 aa). A connecting peptide region spans residues 310–318; sequence EPLQSQAMI. A helical transmembrane segment spans residues 319 to 339; the sequence is IGIISGVTVCAIFLVGILFLI. At 340–359 the chain is on the cytoplasmic side; that stretch reads LRKRKASGGTMGGYVLTDCE.

The protein belongs to the MHC class I family. Binds TFR through the extracellular domain in a pH-dependent manner.

The protein resides in the cell membrane. Its function is as follows. Binds to transferrin receptor (TFR) and reduces its affinity for iron-loaded transferrin. In Mus musculus (Mouse), this protein is Hereditary hemochromatosis protein homolog (Hfe).